The following is a 149-amino-acid chain: MHKRVVDFIKKQYLFTLACTENNLPWANAFYYVFDEKENRLIYITGDQTHHAKVLRNNSRVAGTIFVPTKFVPSLQGVQFTGRSSQLFSTQAEQARALYKTEYSHHLIDQLTVWQVELEYVRLVDNSLGLFSTIEWRKGQVVEETDHYA.

This sequence belongs to the UPF0306 family.

The protein is UPF0306 protein PM1958 of Pasteurella multocida (strain Pm70).